The chain runs to 318 residues: Methionyl-tRNA formyltransferase (318 aa).

112-115 (SILP) provides a ligand contact to (6S)-5,6,7,8-tetrahydrofolate.

The protein belongs to the Fmt family.

The catalysed reaction is L-methionyl-tRNA(fMet) + (6R)-10-formyltetrahydrofolate = N-formyl-L-methionyl-tRNA(fMet) + (6S)-5,6,7,8-tetrahydrofolate + H(+). Functionally, attaches a formyl group to the free amino group of methionyl-tRNA(fMet). The formyl group appears to play a dual role in the initiator identity of N-formylmethionyl-tRNA by promoting its recognition by IF2 and preventing the misappropriation of this tRNA by the elongation apparatus. This is Methionyl-tRNA formyltransferase from Haemophilus influenzae (strain PittGG).